A 156-amino-acid polypeptide reads, in one-letter code: ATP synthase subunit b (156 aa).

Residues 3–23 traverse the membrane as a helical segment; the sequence is INFTLLAQALAFAGLIWIIAT.

It belongs to the ATPase B chain family. As to quaternary structure, F-type ATPases have 2 components, F(1) - the catalytic core - and F(0) - the membrane proton channel. F(1) has five subunits: alpha(3), beta(3), gamma(1), delta(1), epsilon(1). F(0) has three main subunits: a(1), b(2) and c(10-14). The alpha and beta chains form an alternating ring which encloses part of the gamma chain. F(1) is attached to F(0) by a central stalk formed by the gamma and epsilon chains, while a peripheral stalk is formed by the delta and b chains.

The protein resides in the cell inner membrane. In terms of biological role, f(1)F(0) ATP synthase produces ATP from ADP in the presence of a proton or sodium gradient. F-type ATPases consist of two structural domains, F(1) containing the extramembraneous catalytic core and F(0) containing the membrane proton channel, linked together by a central stalk and a peripheral stalk. During catalysis, ATP synthesis in the catalytic domain of F(1) is coupled via a rotary mechanism of the central stalk subunits to proton translocation. Functionally, component of the F(0) channel, it forms part of the peripheral stalk, linking F(1) to F(0). The protein is ATP synthase subunit b of Stenotrophomonas maltophilia (strain R551-3).